The primary structure comprises 463 residues: Pentatricopeptide repeat-containing protein At2g17670 (463 aa).

The disordered stretch occupies residues 1–63 (MGKVPSSFRS…PSLRNPFKSP (63 aa)). PPR repeat units follow at residues 121-157 (GRSTFLILLSHACRAPDSSISNVHRVLNLMVNNGLEP), 158-192 (DQVTTDIAVRSLCETGRVDEAKDLMKELTEKHSPP), 193-223 (DTYTYNFLLKHLCKCKDLHVVYEFVDEMRDD), 229-263 (DLVSFTILIDNVCNSKNLREAMYLVSKLGNAGFKP), 264-298 (DCFLYNTIMKGFCTLSKGSEAVGVYKKMKEEGVEP), 299-333 (DQITYNTLIFGLSKAGRVEEARMYLKTMVDAGYEP), 334-368 (DTATYTSLMNGMCRKGESLGALSLLEEMEARGCAP), 369-403 (NDCTYNTLLHGLCKARLMDKGMELYEMMKSSGVKL), and 404-438 (ESNGYATLVRSLVKSGKVAEAYEVFDYAVDSKSLS).

It belongs to the PPR family. P subfamily.

The polypeptide is Pentatricopeptide repeat-containing protein At2g17670 (Arabidopsis thaliana (Mouse-ear cress)).